Reading from the N-terminus, the 117-residue chain is Glycine cleavage system H-like protein (117 aa).

The region spanning 21 to 103 (IVRLGLSSRM…ESEGWFVVLQ (83 aa)) is the Lipoyl-binding domain. Lysine 62 is subject to N6-lipoyllysine.

The protein belongs to the GcvH family. (R)-lipoate serves as cofactor.

This chain is Glycine cleavage system H-like protein, found in Chlamydia muridarum (strain MoPn / Nigg).